The primary structure comprises 274 residues: 3',5'-cyclic adenosine monophosphate phosphodiesterase CpdA (274 aa).

Residues D21, H23, D63, N93, H163, H202, and H204 each contribute to the Fe cation site. Residues H23, D63, and 93–94 contribute to the AMP site; that span reads NH. Residue H204 participates in AMP binding.

It belongs to the cyclic nucleotide phosphodiesterase class-III family. Fe(2+) serves as cofactor.

The catalysed reaction is 3',5'-cyclic AMP + H2O = AMP + H(+). Functionally, hydrolyzes cAMP to 5'-AMP. Plays an important regulatory role in modulating the intracellular concentration of cAMP, thereby influencing cAMP-dependent processes. May coordinate responses to nutritional stress, ensuring optimal competence development. The sequence is that of 3',5'-cyclic adenosine monophosphate phosphodiesterase CpdA from Haemophilus influenzae (strain ATCC 51907 / DSM 11121 / KW20 / Rd).